Here is a 505-residue protein sequence, read N- to C-terminus: Maturase K (505 aa).

This sequence belongs to the intron maturase 2 family. MatK subfamily.

The protein resides in the plastid. The protein localises to the chloroplast. In terms of biological role, usually encoded in the trnK tRNA gene intron. Probably assists in splicing its own and other chloroplast group II introns. The chain is Maturase K from Apocynum androsaemifolium (Spreading dogbane).